We begin with the raw amino-acid sequence, 339 residues long: Phenylalanine--tRNA ligase alpha subunit (339 aa).

Glu247 provides a ligand contact to Mg(2+).

This sequence belongs to the class-II aminoacyl-tRNA synthetase family. Phe-tRNA synthetase alpha subunit type 1 subfamily. As to quaternary structure, tetramer of two alpha and two beta subunits. Mg(2+) is required as a cofactor.

It localises to the cytoplasm. The enzyme catalyses tRNA(Phe) + L-phenylalanine + ATP = L-phenylalanyl-tRNA(Phe) + AMP + diphosphate + H(+). In Deinococcus radiodurans (strain ATCC 13939 / DSM 20539 / JCM 16871 / CCUG 27074 / LMG 4051 / NBRC 15346 / NCIMB 9279 / VKM B-1422 / R1), this protein is Phenylalanine--tRNA ligase alpha subunit (pheS).